The sequence spans 791 residues: Probable potassium transporter 11 (791 aa).

Residues 1 to 49 (MASLSESEGTNRGSMWELDQNLDQPMDEEASRLKNMYREKKFSSLLLLR) are Cytoplasmic-facing. A helical membrane pass occupies residues 50–70 (LAFQSLGVVFGDLGTSPLYVF). At 71 to 87 (YNAFPHGVDDEEDVIGA) the chain is on the extracellular side. The helical transmembrane segment at 88-108 (LSLIIYTLTLIPLLKYVFVVL) threads the bilayer. Over 109 to 175 (RANDNGQGGT…EAHAYKRNCL (67 aa)) the chain is Cytoplasmic. Residues 176–196 (LIVVLIGTCTAIGDGILTPAI) traverse the membrane as a helical segment. Residues 197 to 215 (SVLSASGGIKVQNPNMSTD) lie on the Extracellular side of the membrane. The N-linked (GlcNAc...) asparagine glycan is linked to Asn211. Residues 216 to 236 (VVVIVSVIILIGLFSMQHYGT) form a helical membrane-spanning segment. The Cytoplasmic portion of the chain corresponds to 237 to 238 (DK). A helical membrane pass occupies residues 239-259 (VGWLFAPIVLLWFILIGSVGA). At 260-289 (LNIHKYKGSVLKAYNPVYIYRYFQRRNSDS) the chain is on the extracellular side. A helical membrane pass occupies residues 290 to 310 (WASLGGIMLSITGTEALFADL). The Cytoplasmic portion of the chain corresponds to 311-315 (CHFPV). A helical membrane pass occupies residues 316–338 (FAIQIAFTLIVFPCLLLAYTGQA). Topologically, residues 339 to 359 (AYIIAHKDHVADAFYRSIPDS) are extracellular. Residues 360-380 (IYWPAFVIATAAAIVASQATI) form a helical membrane-spanning segment. Over 381–411 (SATYSIIKQALALGCFPRVKIVHTSKKFLGQ) the chain is Cytoplasmic. A helical transmembrane segment spans residues 412 to 432 (IYIPDINWVLLILCIAVTAGF). Residues 433-444 (KNQSQIGNAYGT) lie on the Extracellular side of the membrane. N-linked (GlcNAc...) asparagine glycosylation is present at Asn434. Residues 445–465 (AVVIVMLVTTFLMVPIMLLVW) form a helical membrane-spanning segment. The Cytoplasmic segment spans residues 466-468 (KSH). A helical membrane pass occupies residues 469 to 489 (WILVVTFIVLSLMVEIPYFSA). Residues 490–496 (CLLKIDQ) are Extracellular-facing. A helical transmembrane segment spans residues 497 to 517 (GGWVPLVIATAFFIIMYVWHF). The Cytoplasmic portion of the chain corresponds to 518–791 (CTVKRYEFEM…LLNVGQIYYI (274 aa)).

This sequence belongs to the HAK/KUP transporter (TC 2.A.72.3) family.

The protein resides in the membrane. Functionally, high-affinity potassium transporter. The protein is Probable potassium transporter 11 of Oryza sativa subsp. japonica (Rice).